Consider the following 82-residue polypeptide: Bowman-Birk type proteinase inhibitor (82 aa).

The segment at S1 to C24 is disordered. Disulfide bonds link C18–C72, C19–C34, C22–C68, C24–C32, C42–C49, C46–C61, and C51–C59.

It belongs to the Bowman-Birk serine protease inhibitor family.

In terms of biological role, trypsin and chymotrypsin are inhibited simultaneously. There are two separate reactive sites for trypsin and chymotrypsin but they do not inhibit simultaneously. The polypeptide is Bowman-Birk type proteinase inhibitor (Phaseolus angularis (Azuki bean)).